A 486-amino-acid chain; its full sequence is UDP-N-acetylmuramoyl-L-alanyl-D-glutamate--2,6-diaminopimelate ligase (486 aa).

Ser-33 is a UDP-N-acetyl-alpha-D-muramoyl-L-alanyl-D-glutamate binding site. 110–116 (GTNGKTS) contacts ATP. Residues 152-153 (TT), Ser-179, Gln-185, and Arg-187 contribute to the UDP-N-acetyl-alpha-D-muramoyl-L-alanyl-D-glutamate site. Lys-219 is subject to N6-carboxylysine. Meso-2,6-diaminopimelate-binding positions include Arg-383, 407 to 410 (DNPR), Gly-455, and Glu-459. Positions 407–410 (DNPR) match the Meso-diaminopimelate recognition motif motif.

The protein belongs to the MurCDEF family. MurE subfamily. The cofactor is Mg(2+). In terms of processing, carboxylation is probably crucial for Mg(2+) binding and, consequently, for the gamma-phosphate positioning of ATP.

It localises to the cytoplasm. The catalysed reaction is UDP-N-acetyl-alpha-D-muramoyl-L-alanyl-D-glutamate + meso-2,6-diaminopimelate + ATP = UDP-N-acetyl-alpha-D-muramoyl-L-alanyl-gamma-D-glutamyl-meso-2,6-diaminopimelate + ADP + phosphate + H(+). The protein operates within cell wall biogenesis; peptidoglycan biosynthesis. Functionally, catalyzes the addition of meso-diaminopimelic acid to the nucleotide precursor UDP-N-acetylmuramoyl-L-alanyl-D-glutamate (UMAG) in the biosynthesis of bacterial cell-wall peptidoglycan. The sequence is that of UDP-N-acetylmuramoyl-L-alanyl-D-glutamate--2,6-diaminopimelate ligase from Zymomonas mobilis subsp. mobilis (strain ATCC 31821 / ZM4 / CP4).